The chain runs to 359 residues: 3-isopropylmalate dehydrogenase (359 aa).

Substrate-binding residues include Arg96, Arg106, Arg134, and Asp223. Asp223, Asp247, and Asp251 together coordinate Mg(2+). 281 to 293 lines the NAD(+) pocket; the sequence is GSAPDIAGQGIAN.

The protein belongs to the isocitrate and isopropylmalate dehydrogenases family. LeuB type 1 subfamily. Homodimer. It depends on Mg(2+) as a cofactor. The cofactor is Mn(2+).

It is found in the cytoplasm. It carries out the reaction (2R,3S)-3-isopropylmalate + NAD(+) = 4-methyl-2-oxopentanoate + CO2 + NADH. It participates in amino-acid biosynthesis; L-leucine biosynthesis; L-leucine from 3-methyl-2-oxobutanoate: step 3/4. Catalyzes the oxidation of 3-carboxy-2-hydroxy-4-methylpentanoate (3-isopropylmalate) to 3-carboxy-4-methyl-2-oxopentanoate. The product decarboxylates to 4-methyl-2 oxopentanoate. In Chromohalobacter salexigens (strain ATCC BAA-138 / DSM 3043 / CIP 106854 / NCIMB 13768 / 1H11), this protein is 3-isopropylmalate dehydrogenase.